Consider the following 314-residue polypeptide: Splicing factor YJU2 (314 aa).

Cys-43, Cys-46, Cys-80, and Cys-83 together coordinate Zn(2+). 2 disordered regions span residues 178–238 (MSQE…NEVP) and 253–314 (LAGL…DSDS). The span at 200-209 (EEARHRRLLE) shows a compositional bias: basic and acidic residues. Phosphoserine is present on residues Ser-211, Ser-213, and Ser-220. The segment covering 222–232 (PRAAARPNPTA) has biased composition (low complexity). Over residues 290–302 (PTPQTPGTSSLSQ) the composition is skewed to polar residues. Ser-309, Ser-312, and Ser-314 each carry phosphoserine.

The protein belongs to the CWC16 family. YJU2 subfamily. Component of the spliceosome. Present in the activated B complex, the catalytically activated B* complex which catalyzes the branching, the catalytic step 1 C complex catalyzing the exon ligation, and the postcatalytic P complex containing the ligated exons (mRNA) and the excised lariat intron.

The protein localises to the nucleus. Part of the spliceosome which catalyzes two sequential transesterification reactions, first the excision of the non-coding intron from pre-mRNA and then the ligation of the coding exons to form the mature mRNA. Plays a role in stabilizing the structure of the spliceosome catalytic core and docking of the branch helix into the active site, producing 5'-exon and lariat intron-3'-intermediates. May protect cells from TP53-dependent apoptosis upon dsDNA break damage through association with PRP19-CD5L complex. The protein is Splicing factor YJU2 of Mus musculus (Mouse).